The chain runs to 2590 residues: 5-methylorsellinic acid synthase (2590 aa).

Positions Leu-6 to Ala-255 are N-terminal acylcarrier protein transacylase domain (SAT). Positions Gly-369–Gln-784 constitute a Ketosynthase family 3 (KS3) domain. Active-site for beta-ketoacyl synthase activity residues include Cys-534, His-669, and His-707. Positions Leu-891–Pro-1191 are malonyl-CoA:ACP transacylase (MAT) domain. The For acyl/malonyl transferase activity role is filled by Ser-978. The N-terminal hotdog fold stretch occupies residues Pro-1263 to Ser-1393. The PKS/mFAS DH domain maps to Pro-1263–Lys-1569. Residues Ser-1267–Leu-1568 are product template (PT) domain. Residue His-1297 is the Proton acceptor; for dehydratase activity of the active site. Positions Thr-1421–Lys-1569 are C-terminal hotdog fold. Asp-1481 serves as the catalytic Proton donor; for dehydratase activity. The tract at residues Leu-1587–Ala-1612 is disordered. Carrier domains lie at Ala-1617 to Thr-1691 and Ser-1736 to Pro-1812. Ser-1651 and Ser-1772 each carry O-(pantetheine 4'-phosphoryl)serine. A methyltransferase (CMeT) domain region spans residues Gln-1980 to Asp-2212. The interval Leu-2282–Leu-2590 is thioesterase (TE) domain.

It carries out the reaction 3 malonyl-CoA + acetyl-CoA + S-adenosyl-L-methionine + H(+) = 5-methylorsellinate + S-adenosyl-L-homocysteine + 3 CO2 + 4 CoA. It participates in secondary metabolite biosynthesis. Functionally, non-reducing polyketide synthase; part of the cluster A that mediates the biosynthesis of azasperpyranones, members of the azaphilone family that exhibit anti-cancer activities. Azasperpyranones are synthesized by 2 clusters, A and B. Cluster A is responsible for the production of the polyhydric phenol moiety while the azaphilonoid scaffold is produced by the cluster B. The non-reducing polyketide synthase ATEG_03629 produces 5-methyl orsellinic acid, which is then reduced to 5-methyl orsellinic aldehyde by the NRPS-like protein ATEG_03630. 5-methyl orsellinic aldehyde is then first hydroxylated by the FAD-dependent monooxygenase ATEG_03635 and subsequently hydroxylated by the cytochrome P450 monooxygenase ATEG_03631 to produce the unstable polyhydric phenol precursor of azasperpyranones. On the other hand, the polyketide synthase ATEG_07659 is responsible for producing the 3,5-dimethyloctadienone moiety from acetyl-CoA, three malonyl-CoA, and two S-adenosyl methionines (SAM). The 3,5-dimethyloctadienone moiety is then loaded onto the SAT domain of ATEG_07661 and extended with four malonyl-CoA and one SAM, which leads to the formation of 2,4-dihydroxy-6-(5,7-dimethyl-2-oxo-trans-3-trans-5-nonadienyl)-3-methylbenzaldehyde (compound 8) after reductive release and aldol condensation. The FAD-dependent monooxygenase ATEG_07662 is the next enzyme in the biosynthesis sequence and hydroxylates the side chain at the benzylic position of compound 8. In Aspergillus nidulans, afoF, the ortholog of the FAD-dependent oxygenase ATEG_07660, is the key enzyme for the biosynthesis of asperfuranone by catalyzing the hydroxylation at C-8 of to prevent the formation of a six-membered ring hemiacetal intermediate and thus facilitating the formation of a five-membered ring to produce asperfuranone. In Aspergillus terreus, ATEG_07660 is probably not functional, which leads to the formation of the six-membered ring hemiacetal intermediate presperpyranone instead of asperfuranone. Finally, ATEG_03636 is involved in the condensation of the polyhydric phenol moiety produced by cluster A and the perasperpyranone precursor produced by cluster B, to yield azasperpyranone A. Further modifications of azasperpyranone A result in the production of derivatives, including azasperpyranone B to F. The protein is 5-methylorsellinic acid synthase of Aspergillus terreus (strain NIH 2624 / FGSC A1156).